We begin with the raw amino-acid sequence, 106 residues long: Cuticle protein CP14.6 (106 aa).

Positions 1-16 (MKSFFVVALLVAAAAA) are cleaved as a signal peptide. Positions 37 to 106 (PQHYSYSVET…PQGAHLPVAA (70 aa)) constitute a Chitin-binding type R&amp;R domain.

Its function is as follows. Component of the cuticle of tobacco hornworm. This chain is Cuticle protein CP14.6 (CP14.6), found in Manduca sexta (Tobacco hawkmoth).